The primary structure comprises 396 residues: L-lactate dehydrogenase (396 aa).

Residues Met-1–Gly-380 form the FMN hydroxy acid dehydrogenase domain. Tyr-24 contributes to the substrate binding site. Positions 106 and 127 each coordinate FMN. Position 129 (Tyr-129) interacts with substrate. Thr-155 is an FMN binding site. Arg-164 serves as a coordination point for substrate. An FMN-binding site is contributed by Lys-251. The active-site Proton acceptor is His-275. Residue Arg-278 coordinates substrate. Asp-306 to Arg-330 serves as a coordination point for FMN.

The protein belongs to the FMN-dependent alpha-hydroxy acid dehydrogenase family. Requires FMN as cofactor.

It localises to the cell inner membrane. The catalysed reaction is (S)-lactate + A = pyruvate + AH2. Its function is as follows. Catalyzes the conversion of L-lactate to pyruvate. Is coupled to the respiratory chain. The protein is L-lactate dehydrogenase of Escherichia coli O81 (strain ED1a).